The chain runs to 539 residues: Chaperone Ric-8A (539 aa).

The tract at residues proline 506–aspartate 539 is disordered.

This sequence belongs to the synembryn family.

Its subcellular location is the cytoplasm. It is found in the cell cortex. Its function is as follows. Chaperone that specifically binds and folds nascent G alpha proteins prior to G protein heterotrimer formation, promoting their stability and activity: folds GNAI1, GNAO1, GNA13 and GNAQ. Does not fold G(s) G-alpha proteins GNAS nor GNAL. Also acts as a guanine nucleotide exchange factor (GEF) for G alpha proteins by stimulating exchange of bound GDP for free GTP. This is Chaperone Ric-8A (ric8a) from Xenopus laevis (African clawed frog).